The chain runs to 196 residues: Large ribosomal subunit protein eL15 (196 aa).

Composition is skewed to basic residues over residues 160-172 and 186-196; these read ATRGKTSAGRKGR and PSIRAHKSRGK. Residues 160–196 are disordered; the sequence is ATRGKTSAGRKGRGMSTRGKGTEKTRPSIRAHKSRGK.

This sequence belongs to the eukaryotic ribosomal protein eL15 family.

The protein is Large ribosomal subunit protein eL15 (rpl15e) of Methanosarcina mazei (strain ATCC BAA-159 / DSM 3647 / Goe1 / Go1 / JCM 11833 / OCM 88) (Methanosarcina frisia).